The chain runs to 240 residues: Uridylate kinase (240 aa).

14–17 (KLSG) serves as a coordination point for ATP. Residue Gly-56 participates in UMP binding. The ATP site is built by Gly-57 and Arg-61. Residues Asp-76 and 137–144 (TGNPFFTT) each bind UMP. Residues Thr-164, Tyr-170, and Asp-173 each coordinate ATP.

This sequence belongs to the UMP kinase family. Homohexamer.

Its subcellular location is the cytoplasm. The enzyme catalyses UMP + ATP = UDP + ADP. Its pathway is pyrimidine metabolism; CTP biosynthesis via de novo pathway; UDP from UMP (UMPK route): step 1/1. Its activity is regulated as follows. Inhibited by UTP. Functionally, catalyzes the reversible phosphorylation of UMP to UDP. This chain is Uridylate kinase, found in Albidiferax ferrireducens (strain ATCC BAA-621 / DSM 15236 / T118) (Rhodoferax ferrireducens).